The following is a 339-amino-acid chain: N-acetyl-gamma-glutamyl-phosphate reductase (339 aa).

Cys145 is an active-site residue.

The protein belongs to the NAGSA dehydrogenase family. Type 1 subfamily.

The protein localises to the cytoplasm. The catalysed reaction is N-acetyl-L-glutamate 5-semialdehyde + phosphate + NADP(+) = N-acetyl-L-glutamyl 5-phosphate + NADPH + H(+). It participates in amino-acid biosynthesis; L-arginine biosynthesis; N(2)-acetyl-L-ornithine from L-glutamate: step 3/4. In terms of biological role, catalyzes the NADPH-dependent reduction of N-acetyl-5-glutamyl phosphate to yield N-acetyl-L-glutamate 5-semialdehyde. This is N-acetyl-gamma-glutamyl-phosphate reductase from Thermotoga petrophila (strain ATCC BAA-488 / DSM 13995 / JCM 10881 / RKU-1).